A 100-amino-acid polypeptide reads, in one-letter code: Small ribosomal subunit protein uS14c (100 aa).

It belongs to the universal ribosomal protein uS14 family. In terms of assembly, part of the 30S ribosomal subunit.

The protein resides in the plastid. It localises to the chloroplast. In terms of biological role, binds 16S rRNA, required for the assembly of 30S particles. The polypeptide is Small ribosomal subunit protein uS14c (Vitis vinifera (Grape)).